A 335-amino-acid chain; its full sequence is HTH-type transcriptional regulator RipA (335 aa).

The HTH araC/xylS-type domain maps to 119-216; sequence RKVAQKLIAY…GDTPSSFTSP (98 aa). 2 DNA-binding regions (H-T-H motif) span residues 136–157 and 183–206; these read LEFA…VAST and IGQV…KRHT.

Under iron limitation, represses the acn (aconitase), catA (catechol 1,2 dioxygenase), leuCD (isopropylmalate dehydratase), narKGHJI (nitrite/nitrate transporter and nitrate reductase), sdhCAB (succinate dehydrogenase), pta (phosphotransacetylase) and katA (catalase) genes. The chain is HTH-type transcriptional regulator RipA from Corynebacterium diphtheriae (strain ATCC 700971 / NCTC 13129 / Biotype gravis).